Here is a 358-residue protein sequence, read N- to C-terminus: Probable D-xylulose reductase A (358 aa).

Zn(2+)-binding residues include Cys-47, His-72, and Glu-73. 182–187 (GAGPVG) is a binding site for NAD(+).

This sequence belongs to the zinc-containing alcohol dehydrogenase family. Requires Zn(2+) as cofactor.

The catalysed reaction is xylitol + NAD(+) = D-xylulose + NADH + H(+). Its pathway is carbohydrate degradation; L-arabinose degradation via L-arabinitol; D-xylulose 5-phosphate from L-arabinose (fungal route): step 4/5. Its function is as follows. Xylitol dehydrogenase which catalyzes the conversion of xylitol to D-xylulose. Xylose is a major component of hemicelluloses such as xylan. Most fungi utilize D-xylose via three enzymatic reactions, xylose reductase (XR), xylitol dehydrogenase (XDH), and xylulokinase, to form xylulose 5-phosphate, which enters pentose phosphate pathway. The chain is Probable D-xylulose reductase A (xdhA) from Aspergillus clavatus (strain ATCC 1007 / CBS 513.65 / DSM 816 / NCTC 3887 / NRRL 1 / QM 1276 / 107).